The primary structure comprises 417 residues: RH-like protein ID (417 aa).

Helical transmembrane passes span 12–32, 44–64, 77–97, 125–145, 172–192, 203–223, 238–258, 265–285, 287–307, 331–351, and 358–378; these read CLPLCALTLEAALTLLFYFFT, LVASYQVGQDLTVMAAIGFGF, VAFNLFMLALGVQWAILLDGF, ISAGAVLGYVNLVQLVVMVLV, IYVFAACFGLSVAWCLPKPLA, TIPSLSAMLGALFLWMFWPSF, VFNTYYAVAVSVVTAISVSSL, INMTYMHNAVLAGGVAVATSC, LIPSPWLAMVLGLVAGLISIG, NFSLLGLLGEIIYIVLLVLDT, and MVGFQVLVSIGELSLAIVIAL.

Belongs to the ammonium transporter (TC 2.A.49) family. Rh subfamily.

It is found in the membrane. May be part of an oligomeric complex which is likely to have a transport or channel function in the erythrocyte membrane. In Gorilla gorilla gorilla (Western lowland gorilla), this protein is RH-like protein ID.